The sequence spans 267 residues: MIVRRQNRRFTIMAAGPRGSGKSSFFNSLIGKEIVTSRGHEGIDLYMLNLDCEGIMQRITLIDTPGFGEGFDDSEIQETICNFIKAQLDMFIAEESKIRRNPKYEDTRVHCLLYFIPSTSSSLKSRDIAFLRKVSGLVNIIPVISKSDGLSITERIEVKRQVMEQIKHYNISIFDLDDPEVYSSPAAGNDLNSLVPFLVVSADRENFESRARNYQWGDVSIDNPDHCDLPALRELLLSTHIYGLIDYTASEIYENYRAAVLEGGVRK.

A Septin-type G domain is found at 6–263; sequence QNRRFTIMAA…ENYRAAVLEG (258 aa). Residues 16-23 are G1 motif; the sequence is GPRGSGKS. GTP contacts are provided by residues 16–23, Gly-66, 146–154, and Arg-212; these read GPRGSGKS and KSDGLSITE. Residues 63-66 form a G3 motif region; it reads DTPG. Residues 145-148 form a G4 motif region; that stretch reads SKSD.

This sequence belongs to the TRAFAC class TrmE-Era-EngA-EngB-Septin-like GTPase superfamily. Septin GTPase family. Component of the septin complex.

Its function is as follows. Septins are GTPases involved in cytokinesis. The septins localize to the site of cleavage and act as a structural scaffold that recruits different components involved in diverse processes at specific stages during the cell cycle. Septins are also involved in cell morphogenesis, chitin deposition, cell cycle regulation, cell compartmentalization and spore wall formation. The chain is Cell division control protein 11 (CDC11) from Encephalitozoon cuniculi (strain GB-M1) (Microsporidian parasite).